Reading from the N-terminus, the 211-residue chain is Ribosomal RNA small subunit methyltransferase G (211 aa).

Residues G73, F78, 124-125 (VE), and R137 contribute to the S-adenosyl-L-methionine site.

This sequence belongs to the methyltransferase superfamily. RNA methyltransferase RsmG family.

It is found in the cytoplasm. Functionally, specifically methylates the N7 position of a guanine in 16S rRNA. The chain is Ribosomal RNA small subunit methyltransferase G from Christiangramia forsetii (strain DSM 17595 / CGMCC 1.15422 / KT0803) (Gramella forsetii).